Consider the following 184-residue polypeptide: Ribosome-recycling factor (184 aa).

The segment at 141–165 is disordered; sequence DEKNGDITEDDLRSQTDDVQKATDN.

It belongs to the RRF family.

The protein localises to the cytoplasm. Its function is as follows. Responsible for the release of ribosomes from messenger RNA at the termination of protein biosynthesis. May increase the efficiency of translation by recycling ribosomes from one round of translation to another. This chain is Ribosome-recycling factor, found in Staphylococcus epidermidis (strain ATCC 35984 / DSM 28319 / BCRC 17069 / CCUG 31568 / BM 3577 / RP62A).